Here is a 476-residue protein sequence, read N- to C-terminus: Ribulose bisphosphate carboxylase large chain (476 aa).

Substrate contacts are provided by Asn124 and Thr174. The active-site Proton acceptor is Lys176. Lys178 provides a ligand contact to substrate. Residues Lys202, Asp204, and Glu205 each contribute to the Mg(2+) site. The residue at position 202 (Lys202) is an N6-carboxylysine. Residue His295 is the Proton acceptor of the active site. Substrate-binding residues include Arg296, His328, and Ser380.

The protein belongs to the RuBisCO large chain family. Type I subfamily. Heterohexadecamer of 8 large chains and 8 small chains; disulfide-linked. The disulfide link is formed within the large subunit homodimers. Mg(2+) is required as a cofactor. The disulfide bond which can form in the large chain dimeric partners within the hexadecamer appears to be associated with oxidative stress and protein turnover.

It is found in the carboxysome. The enzyme catalyses 2 (2R)-3-phosphoglycerate + 2 H(+) = D-ribulose 1,5-bisphosphate + CO2 + H2O. It carries out the reaction D-ribulose 1,5-bisphosphate + O2 = 2-phosphoglycolate + (2R)-3-phosphoglycerate + 2 H(+). In terms of biological role, ruBisCO catalyzes two reactions: the carboxylation of D-ribulose 1,5-bisphosphate, the primary event in carbon dioxide fixation, as well as the oxidative fragmentation of the pentose substrate in the photorespiration process. Both reactions occur simultaneously and in competition at the same active site. This chain is Ribulose bisphosphate carboxylase large chain, found in Trichormus variabilis (strain ATCC 29413 / PCC 7937) (Anabaena variabilis).